A 507-amino-acid chain; its full sequence is Cytochrome P450 4X1 (507 aa).

Residues 14 to 34 (LHLALVFCLALVLMQAMKLYL) traverse the membrane as a helical segment. A heme-binding site is contributed by C452.

This sequence belongs to the cytochrome P450 family. Heme serves as cofactor. As to expression, expressed in brain and aorta. In the brain, expressed in the Purkinje cells of the cerebellum, pyramidal neurons in the dentate gyrus of the hippocampus, cortical forebrain neurons and those of brain stem nuclei (at protein level). In addition to neurons, also expressed in cerebral vascular endothelial cells (at protein level). Also expressed in epithelial cells of the choroid plexus (at protein level). Hardly detectable in heart, lung, kidney and spleen.

The protein localises to the endoplasmic reticulum membrane. It localises to the microsome membrane. The catalysed reaction is N-(5Z,8Z,11Z,14Z-eicosatetraenoyl)-ethanolamine + reduced [NADPH--hemoprotein reductase] + O2 = N-(14,15-epoxy-5Z,8Z,11Z-eicosatrienoyl)-ethanolamine + oxidized [NADPH--hemoprotein reductase] + H2O + H(+). In terms of biological role, a cytochrome P450 monooxygenase that selectively catalyzes the epoxidation of the last double bond of the arachidonoyl moiety of anandamide, potentially modulating endocannabinoid signaling. Has no hydroxylase activity toward various fatty acids, steroids and prostaglandins. Mechanistically, uses molecular oxygen inserting one oxygen atom into a substrate, and reducing the second into a water molecule, with two electrons provided by NADPH via cytochrome P450 reductase (CPR; NADPH-ferrihemoprotein reductase). This is Cytochrome P450 4X1 from Mus musculus (Mouse).